The sequence spans 426 residues: uncharacterized protein (426 aa).

Solcar repeat units follow at residues 125–216 (KNNV…MKRV), 226–315 (HSPL…LKRT), and 334–422 (PNGL…CKKW). 6 helical membrane-spanning segments follow: residues 130–151 (YFISGGIAGIVSRTCTAPLDRL), 193–213 (GINVLKVMPESSIKFGTYEAM), 229–249 (LYSYLAGGMAGSVAQMFIYPV), 290–310 (GVLVGILGMFPYSATDLGTFE), 336–356 (GLVMAFGALSGSTGATIVFPL), and 394–415 (LYKGLSPNLLKVAPSVAISYLV).

The protein belongs to the mitochondrial carrier (TC 2.A.29) family.

It localises to the mitochondrion inner membrane. This is an uncharacterized protein from Schizosaccharomyces pombe (strain 972 / ATCC 24843) (Fission yeast).